We begin with the raw amino-acid sequence, 418 residues long: Probable mitochondrial adenine nucleotide transporter BTL2 (418 aa).

3 Solcar repeats span residues 122–205 (MNTR…YRKQ), 215–300 (ATNF…LKSS), and 329–414 (LGPI…MKIV). Transmembrane regions (helical) follow at residues 127–147 (HLWA…PLER), 180–200 (GNLL…CAYD), 221–241 (FVAG…LDTI), 276–296 (LVPS…VYDI), 335–355 (LMYG…FEVV), and 383–403 (IPAL…SASI).

The protein belongs to the mitochondrial carrier (TC 2.A.29) family.

The protein resides in the mitochondrion inner membrane. Probable mitochondrial adenylate carrier that catalyzes the transport of ATP, ADP and AMP. The chain is Probable mitochondrial adenine nucleotide transporter BTL2 from Arabidopsis thaliana (Mouse-ear cress).